A 234-amino-acid polypeptide reads, in one-letter code: Uridylate kinase (234 aa).

Residue 9 to 12 coordinates ATP; sequence KLSG. Gly-51 contacts UMP. 2 residues coordinate ATP: Gly-52 and Arg-56. Residues Asp-71 and 132–139 each bind UMP; that span reads CGNPFFTT. The ATP site is built by Thr-159, Tyr-165, and Asp-168.

This sequence belongs to the UMP kinase family. As to quaternary structure, homohexamer.

Its subcellular location is the cytoplasm. The catalysed reaction is UMP + ATP = UDP + ADP. Its pathway is pyrimidine metabolism; CTP biosynthesis via de novo pathway; UDP from UMP (UMPK route): step 1/1. With respect to regulation, inhibited by UTP. In terms of biological role, catalyzes the reversible phosphorylation of UMP to UDP. In Prochlorococcus marinus (strain AS9601), this protein is Uridylate kinase.